Consider the following 350-residue polypeptide: Glycerol-3-phosphate dehydrogenase [NAD(+)], cytoplasmic (350 aa).

Residues 11–16, phenylalanine 98, lysine 121, and alanine 155 each bind NAD(+); that span reads GSGNWG. Position 121 (lysine 121) interacts with substrate. Residue lysine 206 is the Proton acceptor of the active site. Residues arginine 270 and glutamine 299 each contribute to the NAD(+) site. 270–271 is a substrate binding site; sequence RN.

The protein belongs to the NAD-dependent glycerol-3-phosphate dehydrogenase family. In terms of assembly, homodimer.

It is found in the cytoplasm. The catalysed reaction is sn-glycerol 3-phosphate + NAD(+) = dihydroxyacetone phosphate + NADH + H(+). It functions in the pathway phospholipid metabolism; alpha-glycerophosphate cycle. This Drosophila ezoana (Fruit fly) protein is Glycerol-3-phosphate dehydrogenase [NAD(+)], cytoplasmic (Gpdh1).